A 213-amino-acid chain; its full sequence is Transcription antitermination protein NusB (213 aa).

It belongs to the NusB family.

Its function is as follows. Involved in transcription antitermination. Required for transcription of ribosomal RNA (rRNA) genes. Binds specifically to the boxA antiterminator sequence of the ribosomal RNA (rrn) operons. In Picosynechococcus sp. (strain ATCC 27264 / PCC 7002 / PR-6) (Agmenellum quadruplicatum), this protein is Transcription antitermination protein NusB.